A 170-amino-acid polypeptide reads, in one-letter code: Mediator of RNA polymerase II transcription subunit 10 (170 aa).

It belongs to the Mediator complex subunit 10 family. In terms of assembly, component of the Mediator complex.

It localises to the nucleus. In terms of biological role, component of the Mediator complex, a coactivator involved in the regulated transcription of nearly all RNA polymerase II-dependent genes. Mediator functions as a bridge to convey information from gene-specific regulatory proteins to the basal RNA polymerase II transcription machinery. Mediator is recruited to promoters by direct interactions with regulatory proteins and serves as a scaffold for the assembly of a functional preinitiation complex with RNA polymerase II and the general transcription factors. In Candida albicans (strain SC5314 / ATCC MYA-2876) (Yeast), this protein is Mediator of RNA polymerase II transcription subunit 10 (NUT2).